We begin with the raw amino-acid sequence, 434 residues long: MTTQVVNVIGAGLAGSEAAYQIAKRGVQVRLYEMRPVRQTPAHHTDKFAELVCSNSLRANTLTNAVGVIKEEMRLMDSVIIRAADECSVPAGGALAVDRHEFAAKVTEYVKNHPNVTVMNEEITDIPEGPTIIATGPLTSPDLSAKLKELTGEDYFYFYDAAAPIVEKDSIDMNKVYLKSRYDKGEAAYLNCPMTEEEFDRFYEALIAAETVPLKEFEKEIFFEGCMPVEVMASRGRQTLVFGPMKPVGLEDPKTGKTPYAVVQLRQDDAAGTLYNIVGFQTHLKWGPQKEVLQLIPGLENAEIVRYGVMHRNTFINSPNLLRPTYQYKQRDDLFFAGQMTGVEGYVESAASGLLAGINAARLVQGEEPVVLPPVTAMGSMANYITATNAKNFQPMNANFGLFAPLEKKIKKKVERNEAYAARALETIRNFVNI.

Residue 10-15 (GAGLAG) participates in FAD binding.

The protein belongs to the MnmG family. TrmFO subfamily. FAD serves as cofactor.

The protein localises to the cytoplasm. It carries out the reaction uridine(54) in tRNA + (6R)-5,10-methylene-5,6,7,8-tetrahydrofolate + NADH + H(+) = 5-methyluridine(54) in tRNA + (6S)-5,6,7,8-tetrahydrofolate + NAD(+). It catalyses the reaction uridine(54) in tRNA + (6R)-5,10-methylene-5,6,7,8-tetrahydrofolate + NADPH + H(+) = 5-methyluridine(54) in tRNA + (6S)-5,6,7,8-tetrahydrofolate + NADP(+). In terms of biological role, catalyzes the folate-dependent formation of 5-methyl-uridine at position 54 (M-5-U54) in all tRNAs. In Bacillus cereus (strain ATCC 14579 / DSM 31 / CCUG 7414 / JCM 2152 / NBRC 15305 / NCIMB 9373 / NCTC 2599 / NRRL B-3711), this protein is Methylenetetrahydrofolate--tRNA-(uracil-5-)-methyltransferase TrmFO.